The primary structure comprises 515 residues: Putative BTB/POZ domain-containing protein At3g49970 (515 aa).

In terms of domain architecture, BTB spans 1 to 63 (MLEKLSFLLH…CYDISFEINT (63 aa)). The region spanning 149 to 409 (DWWADDLAVL…NSDSPAPATA (261 aa)) is the NPH3 domain. A Phosphotyrosine modification is found at Tyr-350. The disordered stretch occupies residues 395–417 (QENLSNSDSPAPATAEKTLSPPE). Residues 418-452 (LSSYKNELSKLNRENQYLKLELLKVKMKFKELEKE) are a coiled coil. Residues 494 to 515 (INPFGLKQGQTKQPKSRRHSIS) are disordered.

This sequence belongs to the NPH3 family.

It participates in protein modification; protein ubiquitination. In terms of biological role, may act as a substrate-specific adapter of an E3 ubiquitin-protein ligase complex (CUL3-RBX1-BTB) which mediates the ubiquitination and subsequent proteasomal degradation of target proteins. The protein is Putative BTB/POZ domain-containing protein At3g49970 of Arabidopsis thaliana (Mouse-ear cress).